The chain runs to 596 residues: Germinal center kinase 3 (596 aa).

A compositionally biased stretch (low complexity) spans 1–54; it reads MSSSNLAGNTNTTTTSSAASAAAAHSAANASTITSEYSTTQTTTGTFNTDTLSS. The disordered stretch occupies residues 1 to 80; it reads MSSSNLAGNT…PPPPPQVSSP (80 aa). Residues threonine 13 and threonine 32 each carry the phosphothreonine; by autocatalysis modification. Positions 67–77 are enriched in pro residues; sequence SQPPPPPPPQV. One can recognise a Protein kinase domain in the interval 108–386; that stretch reads YKLDESIGVG…ASELLKYSFF (279 aa). Residues 114-122 and lysine 137 each bind ATP; that span reads IGVGATATV. A Phosphoserine; by autocatalysis modification is found at serine 190. The active-site Proton acceptor is aspartate 240. Residue threonine 280 is modified to Phosphothreonine. The residue at position 405 (serine 405) is a Phosphoserine; by autocatalysis. Serine 419 bears the Phosphoserine mark. Positions 429–496 are disordered; it reads NWEFEYDSPQ…EGGGATTPCP (68 aa). The segment covering 432–450 has biased composition (acidic residues); it reads FEYDSPQESDDDSDLEDEE. Residues 466–479 show a composition bias toward gly residues; sequence GAAGAAGGATGGAA.

Belongs to the protein kinase superfamily. STE Ser/Thr protein kinase family. STE20 subfamily. Interacts (via C-terminus) with clh-3; required for the phosphorylation-mediated inhibition of clh-3 function. Interacts (via C-terminus) with wnk-1; the interaction is direct. In terms of processing, phosphorylated at Thr-280 and Ser-419 probably by wnk-1; phosphorylation results in weak activation. Predominantly autophosphorylated at Thr-32 and Ser-190 and weakly autophosphorylated at Thr-13 and Ser-405 in vitro. In terms of tissue distribution, ubiquitously expressed with a higher expression in the excretory cell. Expressed in both male and female germ cells; up-regulated in maturing spermatocytes but absent in mature sperm.

Its subcellular location is the cytoplasm. It localises to the nucleus. The catalysed reaction is L-seryl-[protein] + ATP = O-phospho-L-seryl-[protein] + ADP + H(+). It catalyses the reaction L-threonyl-[protein] + ATP = O-phospho-L-threonyl-[protein] + ADP + H(+). Functionally, plays a role in osmotic stress responses by regulating ion homeostasis and by controlling cell volume via the phosphorylation-mediated inhibition of the chloride channel clh-3. In addition, increases gpdh-1 translation upon osmotic stress, likely downstream of wnk-1. Involved in several developmental processes including the tubular formation of the excretory canals, the formation of the intestine and the progression through larval stages. In addition, required for germ line development by controlling meiosis and chromosomal segregation during spermatogenesis. By controlling clh-3 activity, may regulate the development of the excretory canals and fertility. In Caenorhabditis elegans, this protein is Germinal center kinase 3.